Reading from the N-terminus, the 276-residue chain is Ribosomal RNA small subunit methyltransferase A (276 aa).

Residues N27, L29, G54, E75, D101, and N122 each contribute to the S-adenosyl-L-methionine site.

The protein belongs to the class I-like SAM-binding methyltransferase superfamily. rRNA adenine N(6)-methyltransferase family. RsmA subfamily.

It is found in the cytoplasm. It catalyses the reaction adenosine(1518)/adenosine(1519) in 16S rRNA + 4 S-adenosyl-L-methionine = N(6)-dimethyladenosine(1518)/N(6)-dimethyladenosine(1519) in 16S rRNA + 4 S-adenosyl-L-homocysteine + 4 H(+). Functionally, specifically dimethylates two adjacent adenosines (A1518 and A1519) in the loop of a conserved hairpin near the 3'-end of 16S rRNA in the 30S particle. May play a critical role in biogenesis of 30S subunits. This chain is Ribosomal RNA small subunit methyltransferase A, found in Brucella abortus (strain S19).